The chain runs to 387 residues: Early growth response protein 3 (387 aa).

The disordered stretch occupies residues 241 to 283 (PGFGSLPQPPLTLKPIRPRKYPNRPSKTPLHERPHACPAEGCD). Basic and acidic residues predominate over residues 269–283 (PLHERPHACPAEGCD). 3 consecutive C2H2-type zinc fingers follow at residues 275-299 (HACP…LRIH), 305-327 (FQCR…IRTH), and 333-355 (FACE…AKIH). The tract at residues 348 to 387 (RKRHAKIHLKQKEKKSEKGGAPSASSAPTVSLAPVVTTCA) is disordered. Positions 350–360 (RHAKIHLKQKE) are enriched in basic residues.

The protein belongs to the EGR C2H2-type zinc-finger protein family.

It is found in the nucleus. Probable transcription factor involved in muscle spindle development. This is Early growth response protein 3 (Egr3) from Mus musculus (Mouse).